The primary structure comprises 102 residues: uncharacterized protein (102 aa).

Residues 1–22 (MKFKYGATLFSGFLGLSAILAA) form the signal peptide. The N-palmitoyl cysteine moiety is linked to residue cysteine 23. The S-diacylglycerol cysteine moiety is linked to residue cysteine 23.

The protein belongs to the MG185/MG260 family.

It localises to the cell membrane. This is an uncharacterized protein from Mycoplasma pneumoniae (strain ATCC 29342 / M129 / Subtype 1) (Mycoplasmoides pneumoniae).